Here is a 223-residue protein sequence, read N- to C-terminus: Ribosome assembly factor mrt4 (223 aa).

This sequence belongs to the universal ribosomal protein uL10 family. In terms of assembly, associates with the pre-60S ribosomal particle.

It is found in the nucleus. The protein localises to the nucleolus. It localises to the cytoplasm. Its function is as follows. Component of the ribosome assembly machinery. Nuclear paralog of the ribosomal protein P0, it binds pre-60S subunits at an early stage of assembly in the nucleolus, and is replaced by P0 in cytoplasmic pre-60S subunits and mature 80S ribosomes. The polypeptide is Ribosome assembly factor mrt4 (Dictyostelium discoideum (Social amoeba)).